A 1357-amino-acid chain; its full sequence is DNA-directed RNA polymerase subunit beta (1357 aa).

The protein belongs to the RNA polymerase beta chain family. As to quaternary structure, the RNAP catalytic core consists of 2 alpha, 1 beta, 1 beta' and 1 omega subunit. When a sigma factor is associated with the core the holoenzyme is formed, which can initiate transcription.

The catalysed reaction is RNA(n) + a ribonucleoside 5'-triphosphate = RNA(n+1) + diphosphate. DNA-dependent RNA polymerase catalyzes the transcription of DNA into RNA using the four ribonucleoside triphosphates as substrates. The chain is DNA-directed RNA polymerase subunit beta from Pseudomonas fluorescens (strain Pf0-1).